The chain runs to 632 residues: 2-hydroxyacyl-CoA lyase 2 (632 aa).

Residues phenylalanine 13–alanine 33 traverse the membrane as a helical segment. A thiamine diphosphate-binding site is contributed by glutamate 98. Serine 369 carries the phosphoserine modification. The interval aspartate 470–glycine 550 is thiamine pyrophosphate binding. Residues aspartate 521 and asparagine 547 each contribute to the Mg(2+) site.

This sequence belongs to the TPP enzyme family. It depends on Mg(2+) as a cofactor. The cofactor is thiamine diphosphate.

Its subcellular location is the endoplasmic reticulum membrane. The enzyme catalyses 2-hydroxyoctadecanoyl-CoA = heptadecanal + formyl-CoA. The catalysed reaction is (2R)-hydroxyhexadecanoyl-CoA = pentadecanal + formyl-CoA. In terms of biological role, endoplasmic reticulum 2-OH acyl-CoA lyase involved in the cleavage (C1 removal) reaction in the fatty acid alpha-oxydation in a thiamine pyrophosphate (TPP)-dependent manner. Involved in the phytosphingosine degradation pathway. The chain is 2-hydroxyacyl-CoA lyase 2 (Ilvbl) from Mus musculus (Mouse).